The sequence spans 362 residues: dTDP-glucose 4,6-dehydratase (362 aa).

Residues 11-12 (FI), 32-35 (DKLT), 58-59 (DI), 80-84 (LAAES), and threonine 99 contribute to the NAD(+) site. Position 84 (serine 84) interacts with substrate. Position 133 (threonine 133) interacts with substrate. The Proton donor role is filled by aspartate 134. Catalysis depends on proton acceptor residues glutamate 135 and tyrosine 167. 167–171 (YSASK) lines the NAD(+) pocket. Substrate is bound at residue asparagine 196. Asparagine 197 serves as a coordination point for NAD(+). Residues 206–207 (KL), 222–224 (PVY), arginine 231, asparagine 266, and 300–304 (DRPGH) each bind substrate.

Belongs to the NAD(P)-dependent epimerase/dehydratase family. dTDP-glucose dehydratase subfamily. It depends on NAD(+) as a cofactor.

It catalyses the reaction dTDP-alpha-D-glucose = dTDP-4-dehydro-6-deoxy-alpha-D-glucose + H2O. It functions in the pathway bacterial outer membrane biogenesis; LPS O-antigen biosynthesis. Functionally, catalyzes the dehydration of dTDP-D-glucose to form dTDP-4-dehydro-6-deoxy-D-glucose via a three-step process involving oxidation, dehydration and reduction. This reaction is a step in the biosynthesis of D-fucofuranose, a component of E.coli O52 O antigen. The protein is dTDP-glucose 4,6-dehydratase (rmlB) of Escherichia coli.